We begin with the raw amino-acid sequence, 228 residues long: Cytidylate kinase (228 aa).

11-19 provides a ligand contact to ATP; that stretch reads GPAGTGKSS.

Belongs to the cytidylate kinase family. Type 1 subfamily.

The protein resides in the cytoplasm. The catalysed reaction is CMP + ATP = CDP + ADP. The enzyme catalyses dCMP + ATP = dCDP + ADP. This chain is Cytidylate kinase, found in Mycolicibacterium paratuberculosis (strain ATCC BAA-968 / K-10) (Mycobacterium paratuberculosis).